The primary structure comprises 329 residues: Mitochondrial nuclease (329 aa).

The Proton acceptor role is filled by histidine 138. Asparagine 170 provides a ligand contact to Mg(2+).

This sequence belongs to the DNA/RNA non-specific endonuclease family. As to quaternary structure, homodimer. Requires Mn(2+) as cofactor. Mg(2+) serves as cofactor.

It localises to the mitochondrion inner membrane. Functionally, this enzyme has both RNase and DNase activity. This Saccharomyces cerevisiae (strain ATCC 204508 / S288c) (Baker's yeast) protein is Mitochondrial nuclease (NUC1).